The chain runs to 587 residues: Envelope glycoprotein (587 aa).

Positions 1–22 are cleaved as a signal peptide; it reads MNFNHHFTWSLVIISQIFQVQA. Over 23-527 the chain is Extracellular; sequence GFGDPREALL…TGFHGLLPYV (505 aa). Residues Asn120 and Asn237 are each glycosylated (N-linked (GlcNAc...) asparagine; by host). Positions 248-251 match the CXXC motif; the sequence is CWLC. Disulfide bonds link Cys248–Cys251, Cys248–Cys484, and Cys476–Cys483. 10 N-linked (GlcNAc...) asparagine; by host glycosylation sites follow: Asn266, Asn271, Asn277, Asn280, Asn295, Asn308, Asn322, Asn328, Asn340, and Asn358. Residues 399-419 form a fusion peptide region; the sequence is FIPLVIGLGITTAVSTGTAGL. 2 coiled-coil regions span residues 420–470 and 480–516; these read GVSL…LLTA and QEKC…DNPF. Residues 459–475 are immunosuppression; sequence LQNRRGLDLLTAEQGGI. The CX6CC signature appears at 476–484; the sequence is CLALQEKCC. Asn488 carries an N-linked (GlcNAc...) asparagine; by host glycan. The chain crosses the membrane as a helical span at residues 528 to 548; that stretch reads MPLLGPLLCLLLVLSFGPIIF. Over 549-587 the chain is Cytoplasmic; that stretch reads NKLMTFIKHQIESIQAKPIQVHYHRLEQEDHGGSYLNLT. Positions 571-574 match the YXXL motif; contains endocytosis signal motif; that stretch reads YHRL.

The mature envelope protein (Env) consists of a trimer of SU-TM heterodimers attached by a labile interchain disulfide bond. Specific enzymatic cleavages in vivo yield mature proteins. Envelope glycoproteins are synthesized as an inactive precursor that is N-glycosylated and processed likely by host cell furin or by a furin-like protease in the Golgi to yield the mature SU and TM proteins. The cleavage site between SU and TM requires the minimal sequence [KR]-X-[KR]-R. The R-peptide is released from the C-terminus of the cytoplasmic tail of the TM protein upon particle formation as a result of proteolytic cleavage by the viral protease. Cleavage of this peptide is required for TM to become fusogenic. In terms of processing, the CXXC motif is highly conserved across a broad range of retroviral envelope proteins. It is thought to participate in the formation of a labile disulfide bond possibly with the CX6CC motif present in the transmembrane protein. Isomerization of the intersubunit disulfide bond to an SU intrachain disulfide bond is thought to occur upon receptor recognition in order to allow membrane fusion.

The protein localises to the virion membrane. Its subcellular location is the host cell membrane. In terms of biological role, the surface protein (SU) attaches the virus to the host cell by binding to its receptor. This interaction triggers the refolding of the transmembrane protein (TM) and is thought to activate its fusogenic potential by unmasking its fusion peptide. Fusion occurs at the host cell plasma membrane. The transmembrane protein (TM) acts as a class I viral fusion protein. Under the current model, the protein has at least 3 conformational states: pre-fusion native state, pre-hairpin intermediate state, and post-fusion hairpin state. During viral and target cell membrane fusion, the coiled coil regions (heptad repeats) assume a trimer-of-hairpins structure, positioning the fusion peptide in close proximity to the C-terminal region of the ectodomain. The formation of this structure appears to drive apposition and subsequent fusion of viral and target cell membranes. Membranes fusion leads to delivery of the nucleocapsid into the cytoplasm. The sequence is that of Envelope glycoprotein (env) from Simian retrovirus SRV-1.